The chain runs to 191 residues: MKVIKMIILAMTGASGVIYGERILKALRGAGVRIGLMITDTAREIIRYELGIEPGALEELADECFDASDFTTSINSGSSPFRAMVIAPCTMKTLSAIANGYAENSLTRAADVCLKERRDLVLVPRETPLRSVHLENMLRVSREGGIILPAMPGFYHKPASIEDMADFIAGKVLDVLGIENDLFRRWTGKDI.

FMN contacts are provided by residues 13–15 (GAS), threonine 39, 90–93 (TMKT), and arginine 125. Dimethylallyl phosphate is bound by residues tyrosine 155 and lysine 171.

The protein belongs to the UbiX/PAD1 family.

The enzyme catalyses dimethylallyl phosphate + FMNH2 = prenylated FMNH2 + phosphate. Functionally, flavin prenyltransferase that catalyzes the synthesis of the prenylated FMN cofactor (prenyl-FMN) for 4-hydroxy-3-polyprenylbenzoic acid decarboxylase UbiD. The prenyltransferase is metal-independent and links a dimethylallyl moiety from dimethylallyl monophosphate (DMAP) to the flavin N5 and C6 atoms of FMN. The protein is Flavin prenyltransferase UbiX of Methanothermobacter thermautotrophicus (strain ATCC 29096 / DSM 1053 / JCM 10044 / NBRC 100330 / Delta H) (Methanobacterium thermoautotrophicum).